A 480-amino-acid chain; its full sequence is Glutarate-semialdehyde dehydrogenase (480 aa).

NADP(+)-binding positions include 156–157, 180–183, and 233–234; these read WN, KPAS, and GS. Glu-255 serves as the catalytic Proton acceptor. Leu-256 contributes to the NADP(+) binding site. Residue Cys-289 is the Nucleophile of the active site. Glu-384 lines the NADP(+) pocket.

The protein belongs to the aldehyde dehydrogenase family.

It carries out the reaction 5-oxopentanoate + NADP(+) + H2O = glutarate + NADPH + 2 H(+). Its pathway is amino-acid degradation. Its function is as follows. Catalyzes the conversion of 5-oxopentanoate (glutarate semialdehyde) to glutarate. Involved in L-lysine degradation. In Pseudomonas putida (strain ATCC 47054 / DSM 6125 / CFBP 8728 / NCIMB 11950 / KT2440), this protein is Glutarate-semialdehyde dehydrogenase.